A 483-amino-acid chain; its full sequence is Protein FIZZY-RELATED 2 (483 aa).

A disordered region spans residues 1-28; that stretch reads MEEEDPTASNVITNSNSSSMRNLSPAMN. Positions 7–28 are enriched in polar residues; that stretch reads TASNVITNSNSSSMRNLSPAMN. 7 WD repeats span residues 174–211, 215–254, 257–294, 298–337, 340–382, 384–425, and 428–467; these read QDDF…VTKL, GAED…RTRT, GHRL…DHVS, GHKS…PVLK, EHTA…HLSS, DTCS…KIAT, and GHTY…KSQN.

Belongs to the WD repeat CDC20/Fizzy family. In terms of assembly, associates with the APC/C complex. Interacts with CDC20-1, CDC20-2, CYCA1-1, CYCA1-2, CYCA3-4, CYCB1-1 and CYCB1-2. Binds to GIG1 and PYM. Expressed in seedlings, flowers, leaves and roots. Expressed in the differentiating cell files of the root elongation zone.

The protein localises to the nucleus. It participates in protein modification; protein ubiquitination. Activator protein that regulates the ubiquitin ligase activity and substrate specificity of the anaphase promoting complex/cyclosome (APC/C). Necessary and sufficient for endoreduplication and correct cell expansion. Controls meristem size by stimulating endoreduplication in the elongation zone. This is Protein FIZZY-RELATED 2 (FZR2) from Arabidopsis thaliana (Mouse-ear cress).